A 396-amino-acid chain; its full sequence is Maltose/maltodextrin-binding periplasmic protein (396 aa).

The first 26 residues, 1-26 (MKIKTGVGILALSALTTMMISAPALA), serve as a signal peptide directing secretion.

Belongs to the bacterial solute-binding protein 1 family. As to quaternary structure, the complex is composed of two ATP-binding proteins (MalK), two transmembrane proteins (MalG and MalF) and a solute-binding protein (MalE).

The protein localises to the periplasm. Functionally, part of the ABC transporter complex MalEFGK involved in maltose/maltodextrin import. Binds maltose and higher maltodextrins. The polypeptide is Maltose/maltodextrin-binding periplasmic protein (malE) (Salmonella typhimurium (strain LT2 / SGSC1412 / ATCC 700720)).